The primary structure comprises 492 residues: Spore germination protein GerLA (492 aa).

3 consecutive transmembrane segments (helical) span residues 295–315, 384–404, and 410–430; these read IIAV…QGLI, FLVI…VYSI, and ILLF…IILA.

The protein belongs to the GerABKA family.

It localises to the membrane. In terms of biological role, contributes to the L-alanine germination response. The polypeptide is Spore germination protein GerLA (gerLA) (Bacillus cereus).